The sequence spans 384 residues: MLASYASDPLKSRGRLYKEIPTSYRNEFERDRDRIIHTNAFRRLQYKTQVFINHEGDHYRNRLTHSLEVSTVARSVASTLNLSNDLAETIALAHDLGHTPFGHAGERALNECMREYNGFSHNAQSLKILTLLEKRYAAYNGVNLTWEVLEGIVKHNGPILGEINEYIAEYNKQNDLELSTYASAEAQIAALADDISYISHDLEDSIGAKIIDFHSLAELKYIDQHVVELKSKFKNISSSCLIYEVVRKLIHELITDLLWQTKENLNKEKITNIDEIRNLNYQIVDFTEKTNKNIKETKKFLHERVYKSNKITAISLKCTKIVQGLFKVYMDDINLLPVNWKMLIDSNETYSKARVVADYIAGMTDRFAIQEYNQLCSTSYITCF.

Residues 62–198 (RLTHSLEVST…AALADDISYI (137 aa)) form the HD domain.

It belongs to the dGTPase family. Type 2 subfamily.

The protein is Deoxyguanosinetriphosphate triphosphohydrolase-like protein of Rickettsia conorii (strain ATCC VR-613 / Malish 7).